Consider the following 541-residue polypeptide: Developmental and secondary metabolism regulator VEL1 (541 aa).

Positions 26 to 220 (NRHLWYQLTV…ADQGCRVRIR (195 aa)) constitute a Velvet domain. The Nuclear localization signal motif lies at 40–45 (ERARAC). Disordered stretches follow at residues 222 to 447 (DVRM…MPTQ) and 464 to 483 (PIEAQTEPLPPPPLLPTGGK). Positions 230–244 (GKGSGYDRREEEYAR) are enriched in basic and acidic residues. Residues 289-298 (APSLPHAPSL) show a composition bias toward low complexity. Composition is skewed to pro residues over residues 299 to 314 (PHAPPPPAYDAPPPAA), 345 to 355 (APIPPVTPTGP), and 425 to 439 (SPAPMTPYIAPPAPS). The PEST stretch occupies residues 444–472 (MPTQSSLAPLKIASLVSPLPPIEAQTEPL).

It belongs to the velvet family. VeA subfamily. As to quaternary structure, component of the heterotrimeric velvet complex composed of LAE1, VEL1 and VEL2; VEL1 acting as a bridging protein between LAE1 and VEL2.

Its subcellular location is the nucleus. The protein resides in the cytoplasm. In terms of biological role, component of the velvet transcription factor complex that controls sexual/asexual developmental ratio in response to light, promoting sexual development in the darkness while stimulating asexual sporulation under illumination. The velvet complex acts as a global regulator for secondary metabolite gene expression. Controls the expression of the gliotoxin gene cluster. Plays a key role in mycoparasitism. This chain is Developmental and secondary metabolism regulator VEL1, found in Hypocrea virens (strain Gv29-8 / FGSC 10586) (Gliocladium virens).